A 231-amino-acid polypeptide reads, in one-letter code: Protein INCA1 (231 aa).

Positions 75 to 99 (SLHPLEGLPPPEKLWRRKRKKLHLE) are interaction with CCNA1 and CCNA1/CDK2 complex; essential for CDK2 inhibitory activity. The Nuclear localization signal motif lies at 90–95 (RRKRKK). Phosphothreonine is present on Thr-180.

It belongs to the INCA family. In terms of assembly, interacts with CCNA1. Identified in a complex with CCNA1 and CDK2. Interacts with ZNF16; the interaction inhibits INCA1 activity and induces the cell cycle process. Interacts with SPACA9. Interacts with CCNA2, CCNB1 and CCNE1. Interacts with the CCNA1/CDK2 complex. Interacts with ING5, DAZAP2, RNF26, USP15, SPOUT1, DPH7, TRIM26 and RAB5C. In terms of processing, phosphorylated when part of a complex with CCNA1 and CDK2.

It is found in the nucleus. The protein localises to the cytoplasm. In terms of biological role, binds to CDK2-bound cyclins and inhibits the kinase activity of CDK2; binding to cyclins is critical for its function as CDK inhibitor. Inhibits cell growth and proliferation and may play a role in cell cycle control. Required for ING5-mediated regulation of S-phase progression, enhancement of Fas-induced apoptosis and inhibition of cell growth. The protein is Protein INCA1 (Inca1) of Mus musculus (Mouse).